The primary structure comprises 644 residues: Exoribonuclease 2 (644 aa).

Positions 189–516 constitute an RNB domain; that stretch reads RQDLTALNFV…NHRLLKAVIK (328 aa). Residues 561–643 enclose the S1 motif domain; it reads NTRFAAEIID…ETRSIIARPA (83 aa).

This sequence belongs to the RNR ribonuclease family. RNase II subfamily.

The protein resides in the cytoplasm. The enzyme catalyses Exonucleolytic cleavage in the 3'- to 5'-direction to yield nucleoside 5'-phosphates.. Functionally, involved in mRNA degradation. Hydrolyzes single-stranded polyribonucleotides processively in the 3' to 5' direction. This is Exoribonuclease 2 from Salmonella newport (strain SL254).